The following is a 442-amino-acid chain: Cytokine receptor-like factor 3 (442 aa).

Positions 10–46 (EVLLQEARENVEAAQSYRRELGQRLQGLREAQRQIKE) form a coiled coil. Residues 181–274 (PPVQIEELIE…PQTGHSTLVP (94 aa)) enclose the Fibronectin type-III domain.

This sequence belongs to the cytokine receptor-like factor 3 family.

The protein localises to the cytoplasm. Its function is as follows. May play a role in the negative regulation of cell cycle progression. In Mus musculus (Mouse), this protein is Cytokine receptor-like factor 3 (Crlf3).